We begin with the raw amino-acid sequence, 310 residues long: tRNA-cytidine(32) 2-sulfurtransferase (310 aa).

The PP-loop motif motif lies at 47-52; sequence SGGKDS. [4Fe-4S] cluster contacts are provided by Cys122, Cys125, and Cys213.

This sequence belongs to the TtcA family. As to quaternary structure, homodimer. It depends on Mg(2+) as a cofactor. The cofactor is [4Fe-4S] cluster.

It localises to the cytoplasm. The enzyme catalyses cytidine(32) in tRNA + S-sulfanyl-L-cysteinyl-[cysteine desulfurase] + AH2 + ATP = 2-thiocytidine(32) in tRNA + L-cysteinyl-[cysteine desulfurase] + A + AMP + diphosphate + H(+). It participates in tRNA modification. In terms of biological role, catalyzes the ATP-dependent 2-thiolation of cytidine in position 32 of tRNA, to form 2-thiocytidine (s(2)C32). The sulfur atoms are provided by the cysteine/cysteine desulfurase (IscS) system. The protein is tRNA-cytidine(32) 2-sulfurtransferase of Cronobacter sakazakii (strain ATCC BAA-894) (Enterobacter sakazakii).